A 153-amino-acid chain; its full sequence is UPF0756 membrane protein Lm4b_01579 (153 aa).

4 helical membrane passes run 6–26 (MLFLLLFLLLGLIAKNNSLII), 54–74 (WGVTIITVAILIPIATGQIGF), 80–100 (SFKSAAGWIGLGAGIAVSILA), and 117–137 (LVFGTILAVVLFRGIAAGPVI).

The protein belongs to the UPF0756 family.

It is found in the cell membrane. This chain is UPF0756 membrane protein Lm4b_01579, found in Listeria monocytogenes serotype 4b (strain CLIP80459).